The chain runs to 205 residues: Small ribosomal subunit protein uS4 (205 aa).

Residues 1 to 46 (MSKRHSAKYKIDRRMGENLWGRPKSPVNSRSYGPGQHGQRRKSKVS) are disordered. Positions 94-154 (SRLDAIVYRA…EKSRNMALVL (61 aa)) constitute an S4 RNA-binding domain.

It belongs to the universal ribosomal protein uS4 family. As to quaternary structure, part of the 30S ribosomal subunit. Contacts protein S5. The interaction surface between S4 and S5 is involved in control of translational fidelity.

Its function is as follows. One of the primary rRNA binding proteins, it binds directly to 16S rRNA where it nucleates assembly of the body of the 30S subunit. With S5 and S12 plays an important role in translational accuracy. This chain is Small ribosomal subunit protein uS4, found in Caulobacter vibrioides (strain ATCC 19089 / CIP 103742 / CB 15) (Caulobacter crescentus).